A 203-amino-acid polypeptide reads, in one-letter code: Microtubule-associated protein Jupiter (203 aa).

A Phosphoserine modification is found at Ser30. 2 positions are modified to phosphothreonine: Thr41 and Thr102. The segment covering 123–132 has biased composition (polar residues); it reads LISKGNYNGK. 2 disordered regions span residues 123 to 163 and 182 to 203; these read LISK…GNPV and NGGS…SGLW. The segment covering 133 to 146 has biased composition (low complexity); the sequence is SGSVSSASSSVSSS. Ser135 and Ser146 each carry phosphoserine.

This sequence belongs to the MAP Jupiter family.

Its subcellular location is the nucleus. The protein localises to the cytoplasm. The protein resides in the cytoskeleton. It localises to the spindle. Functionally, binds to all microtubule populations. The polypeptide is Microtubule-associated protein Jupiter (Drosophila mojavensis (Fruit fly)).